We begin with the raw amino-acid sequence, 237 residues long: Cytosolic-abundant heat soluble protein 86272 (237 aa).

The segment at 96-125 is disordered; the sequence is FKDQEKYSREQAAIARAHDKDLEKKTEEYR. Residues 111 to 125 show a composition bias toward basic and acidic residues; it reads RAHDKDLEKKTEEYR. A coiled-coil region spans residues 115–193; that stretch reads KDLEKKTEEY…MNALEQSKMA (79 aa). CAHS motif stretches follow at residues 124-142 and 161-179; these read YRKTAEAEAEKIRKELEKQ and QKREVDLEAKYAKKELEHE. Positions 204 to 215 are enriched in low complexity; that stretch reads AGTTVSGGTTVS. The disordered stretch occupies residues 204–237; that stretch reads AGTTVSGGTTVSEHTEVHDGKEKKSLGEKIKSLF. Residues 216 to 237 show a composition bias toward basic and acidic residues; it reads EHTEVHDGKEKKSLGEKIKSLF.

The protein belongs to the Cytosolic-abundant heat soluble protein (CAHS) family.

It localises to the cytoplasm. Its function is as follows. CAHS proteins are cytosolic heat soluble proteins that seem to contribute to the anhydrobiosis in tardigrades, but their specific mechanisms are yet to be identified. It is possible that protection during anhydrobiosis might occur via the stabilization of vitrifying small molecules such as sugars, but not via the direct glass transition of CAHS proteins themselves. The chain is Cytosolic-abundant heat soluble protein 86272 from Hypsibius exemplaris (Freshwater tardigrade).